Reading from the N-terminus, the 82-residue chain is Small ribosomal subunit protein bS18 (82 aa).

This sequence belongs to the bacterial ribosomal protein bS18 family. In terms of assembly, part of the 30S ribosomal subunit. Forms a tight heterodimer with protein bS6.

In terms of biological role, binds as a heterodimer with protein bS6 to the central domain of the 16S rRNA, where it helps stabilize the platform of the 30S subunit. This chain is Small ribosomal subunit protein bS18, found in Chlamydia felis (strain Fe/C-56) (Chlamydophila felis).